Consider the following 331-residue polypeptide: Zinc finger protein 660 (331 aa).

Residues 1 to 12 (MRRKTRNFKHKT) are compositionally biased toward basic residues. Residues 1–35 (MRRKTRNFKHKTVKDNKVLTEGSDQESEKDNSQCC) are disordered. Serine 23 is modified (phosphoserine). 10 C2H2-type zinc fingers span residues 50–72 (YVCT…ERIH), 78–100 (YKCK…RRIH), 106–128 (YTCS…QGIH), 134–156 (YECK…HRVH), 162–184 (YSCI…QRMH), 190–212 (YKCK…QRIH), 218–240 (YECD…QRLH), 246–268 (YKCN…QRVH), 274–296 (YKCN…LRTH), and 302–324 (YKCS…QRKH).

The protein belongs to the krueppel C2H2-type zinc-finger protein family.

It localises to the nucleus. Functionally, may be involved in transcriptional regulation. The polypeptide is Zinc finger protein 660 (ZNF660) (Homo sapiens (Human)).